The sequence spans 493 residues: Ribulose bisphosphate carboxylase large chain (493 aa).

Residues Asn-132 and Thr-182 each coordinate substrate. Lys-184 serves as the catalytic Proton acceptor. Lys-186 contacts substrate. Positions 210, 212, and 213 each coordinate Mg(2+). At Lys-210 the chain carries N6-carboxylysine. The Proton acceptor role is filled by His-302. Arg-303, His-335, and Ser-387 together coordinate substrate.

Belongs to the RuBisCO large chain family. Type I subfamily. As to quaternary structure, heterohexadecamer of 8 large chains and 8 small chains. Mg(2+) serves as cofactor.

It catalyses the reaction 2 (2R)-3-phosphoglycerate + 2 H(+) = D-ribulose 1,5-bisphosphate + CO2 + H2O. The enzyme catalyses D-ribulose 1,5-bisphosphate + O2 = 2-phosphoglycolate + (2R)-3-phosphoglycerate + 2 H(+). RuBisCO catalyzes two reactions: the carboxylation of D-ribulose 1,5-bisphosphate, the primary event in carbon dioxide fixation, as well as the oxidative fragmentation of the pentose substrate. Both reactions occur simultaneously and in competition at the same active site. The chain is Ribulose bisphosphate carboxylase large chain from Acidiphilium cryptum (strain JF-5).